Here is a 121-residue protein sequence, read N- to C-terminus: Protein opa (121 aa).

It belongs to the opacity porin family.

This is Protein opa (opa) from Haemophilus influenzae (strain ATCC 51907 / DSM 11121 / KW20 / Rd).